We begin with the raw amino-acid sequence, 852 residues long: Probable nitrite reductase-hydroxylamine oxidoreductase fusion protein (852 aa).

Positions 1-27 (MLNKSAALVPVVLAFLFLFLCFQCLYA) are cleaved as a signal peptide. The segment at 28-327 (DIRCLTGKDG…DEGRKTLSAP (300 aa)) is nitrite reductase domain. 2 consecutive Plastocyanin-like domains span residues 72–169 (VPGP…IVEP) and 217–307 (GETW…VEEG). The Cu cation site is built by histidine 102 and histidine 145. Positions 328-827 (GQDRQPPTLE…ISWWWGTAQG (500 aa)) are hydroxylamine oxidoreductase domain. Heme contacts are provided by cysteine 406, cysteine 409, histidine 410, histidine 426, cysteine 463, cysteine 466, histidine 467, histidine 471, cysteine 483, cysteine 486, histidine 487, histidine 505, histidine 537, cysteine 543, cysteine 546, histidine 547, histidine 550, cysteine 563, cysteine 566, histidine 567, cysteine 614, cysteine 617, histidine 618, cysteine 686, cysteine 689, histidine 690, and histidine 813.

It in the N-terminal section; belongs to the multicopper oxidase family. Cu cation is required as a cofactor. Requires heme as cofactor.

Its subcellular location is the encapsulin nanocompartment. It catalyses the reaction hydroxylamine + 4 Fe(III)-[cytochrome c] + H2O = 4 Fe(II)-[cytochrome c] + nitrite + 5 H(+). The catalysed reaction is nitric oxide + Fe(III)-[cytochrome c] + H2O = Fe(II)-[cytochrome c] + nitrite + 2 H(+). Its function is as follows. A nitrite reductase-hydroxylamine oxidoreductase protein that probably functions in the type 1 encapsulin nanocompartment. Probably involved in reductive catalysis. Targeted to the encapsulin nanocompartment by association with the diheme domain of the encapsulin shell protein (AC Q1Q6L7). Catalyzes the reduction of nitrite to nitric oxide (NO). Catalyzes the oxidation of hydroxylamine to nitrite. In Kuenenia stuttgartiensis, this protein is Probable nitrite reductase-hydroxylamine oxidoreductase fusion protein.